Here is a 309-residue protein sequence, read N- to C-terminus: Transcriptional regulator HilD (309 aa).

Residues Glu209 to Met306 form the HTH araC/xylS-type domain. DNA-binding regions (H-T-H motif) lie at residues Thr226–Gly247 and Val273–Phe296.

This chain is Transcriptional regulator HilD (hilD), found in Salmonella typhimurium (strain SL1344).